The sequence spans 374 residues: Phosphoserine aminotransferase (374 aa).

Position 46 (R46) interacts with L-glutamate. Residues A80–T81, F104, T150, D174, and Q197 contribute to the pyridoxal 5'-phosphate site. K198 is subject to N6-(pyridoxal phosphate)lysine. Pyridoxal 5'-phosphate is bound at residue N249–T250.

Belongs to the class-V pyridoxal-phosphate-dependent aminotransferase family. SerC subfamily. In terms of assembly, homodimer. It depends on pyridoxal 5'-phosphate as a cofactor.

It is found in the cytoplasm. It catalyses the reaction O-phospho-L-serine + 2-oxoglutarate = 3-phosphooxypyruvate + L-glutamate. It carries out the reaction 4-(phosphooxy)-L-threonine + 2-oxoglutarate = (R)-3-hydroxy-2-oxo-4-phosphooxybutanoate + L-glutamate. It functions in the pathway amino-acid biosynthesis; L-serine biosynthesis; L-serine from 3-phospho-D-glycerate: step 2/3. The protein operates within cofactor biosynthesis; pyridoxine 5'-phosphate biosynthesis; pyridoxine 5'-phosphate from D-erythrose 4-phosphate: step 3/5. Catalyzes the reversible conversion of 3-phosphohydroxypyruvate to phosphoserine and of 3-hydroxy-2-oxo-4-phosphonooxybutanoate to phosphohydroxythreonine. In Nocardioides sp. (strain ATCC BAA-499 / JS614), this protein is Phosphoserine aminotransferase.